The primary structure comprises 366 residues: Adenine DNA glycosylase (366 aa).

DNA is bound at residue 30–31 (WR). Residue Glu-43 is the Proton donor/acceptor of the active site. DNA-binding positions include 48–49 (QT), 86–88 (LGY), Tyr-126, and Glu-188. Residues 105–133 (RYGGKVPDDPDEFSRLKGVGPYTVGAVLS) form the HhH domain. [4Fe-4S] cluster contacts are provided by Cys-198, Cys-205, Cys-208, and Cys-214. DNA is bound at residue Ser-308.

This sequence belongs to the Nth/MutY family. [4Fe-4S] cluster serves as cofactor.

The enzyme catalyses Hydrolyzes free adenine bases from 7,8-dihydro-8-oxoguanine:adenine mismatched double-stranded DNA, leaving an apurinic site.. Functionally, base excision repair (BER) glycosylase that initiates repair of A:oxoG to C:G by removing the inappropriately paired adenine base from the DNA backbone, generating an abasic site product. 8-oxoguanine (oxoG) is a genotoxic DNA lesion resulting from oxidation of guanine; this residue is misread by replicative DNA polymerases, that insert adenine instead of cytosine opposite the oxidized damaged base. Shows a powerful dicrimination of A versus C, since it does not cleave cytosine in oxoG:C pairs. May also be able to remove adenine from A:G mispairs, although this activity may not be physiologically relevant. The protein is Adenine DNA glycosylase of Geobacillus stearothermophilus (Bacillus stearothermophilus).